The sequence spans 284 residues: Bifunctional protein FolD (284 aa).

Residues 165–167 (GRS), Ser-190, and Val-231 each bind NADP(+).

Belongs to the tetrahydrofolate dehydrogenase/cyclohydrolase family. Homodimer.

It carries out the reaction (6R)-5,10-methylene-5,6,7,8-tetrahydrofolate + NADP(+) = (6R)-5,10-methenyltetrahydrofolate + NADPH. It catalyses the reaction (6R)-5,10-methenyltetrahydrofolate + H2O = (6R)-10-formyltetrahydrofolate + H(+). Its pathway is one-carbon metabolism; tetrahydrofolate interconversion. Catalyzes the oxidation of 5,10-methylenetetrahydrofolate to 5,10-methenyltetrahydrofolate and then the hydrolysis of 5,10-methenyltetrahydrofolate to 10-formyltetrahydrofolate. The chain is Bifunctional protein FolD from Geobacillus thermodenitrificans (strain NG80-2).